Here is an 87-residue protein sequence, read N- to C-terminus: Selenoprotein W (87 aa).

Residues 10–13 (CGAU) constitute a cross-link (cysteinyl-selenocysteine (Cys-Sec); redox-active). Sec-13 is a non-standard amino acid (selenocysteine). Cys-37 carries the S-glutathionyl cysteine modification.

The protein belongs to the SelWTH family. Selenoprotein W subfamily. Interacts with DPYSL2, PRDX1, YWHAB, YWHAG, HSP70 and HSP90. In terms of tissue distribution, highest levels detected in skeletal muscle, tongue, heart and brain. Expressed at significantly higher levels in female skeletal muscle than in male and at slightly higher levels in female cardiac muscle than in male (at protein level). Also detected at low levels in liver.

It is found in the cytoplasm. Functionally, plays a role as a glutathione (GSH)-dependent antioxidant. May be involved in a redox-related process. May play a role in the myopathies of selenium deficiency. The polypeptide is Selenoprotein W (Macaca mulatta (Rhesus macaque)).